A 113-amino-acid chain; its full sequence is Prefoldin subunit beta (113 aa).

It belongs to the prefoldin subunit beta family. In terms of assembly, heterohexamer of two alpha and four beta subunits.

The protein localises to the cytoplasm. Its function is as follows. Molecular chaperone capable of stabilizing a range of proteins. Seems to fulfill an ATP-independent, HSP70-like function in archaeal de novo protein folding. This Methanococcus vannielii (strain ATCC 35089 / DSM 1224 / JCM 13029 / OCM 148 / SB) protein is Prefoldin subunit beta.